A 132-amino-acid polypeptide reads, in one-letter code: Small ribosomal subunit protein uS8 (132 aa).

It belongs to the universal ribosomal protein uS8 family. In terms of assembly, part of the 30S ribosomal subunit. Contacts proteins S5 and S12.

In terms of biological role, one of the primary rRNA binding proteins, it binds directly to 16S rRNA central domain where it helps coordinate assembly of the platform of the 30S subunit. The polypeptide is Small ribosomal subunit protein uS8 (Clostridium botulinum (strain Alaska E43 / Type E3)).